Reading from the N-terminus, the 350-residue chain is Biotin synthase (350 aa).

The region spanning 38–256 (NYVQVSTLLS…IAVARIMMPT (219 aa)) is the Radical SAM core domain. Cys-53, Cys-57, and Cys-60 together coordinate [4Fe-4S] cluster. [2Fe-2S] cluster-binding residues include Cys-97, Cys-128, Cys-188, and Arg-260.

Belongs to the radical SAM superfamily. Biotin synthase family. As to quaternary structure, homodimer. The cofactor is [4Fe-4S] cluster. Requires [2Fe-2S] cluster as cofactor.

It catalyses the reaction (4R,5S)-dethiobiotin + (sulfur carrier)-SH + 2 reduced [2Fe-2S]-[ferredoxin] + 2 S-adenosyl-L-methionine = (sulfur carrier)-H + biotin + 2 5'-deoxyadenosine + 2 L-methionine + 2 oxidized [2Fe-2S]-[ferredoxin]. Its pathway is cofactor biosynthesis; biotin biosynthesis; biotin from 7,8-diaminononanoate: step 2/2. Functionally, catalyzes the conversion of dethiobiotin (DTB) to biotin by the insertion of a sulfur atom into dethiobiotin via a radical-based mechanism. This Vibrio vulnificus (strain CMCP6) protein is Biotin synthase.